Here is an 807-residue protein sequence, read N- to C-terminus: Anaphase-promoting complex subunit 4 (807 aa).

Y469 carries the phosphotyrosine modification. The tract at residues D755–A788 is disordered. Residues S757 and S758 each carry the phosphoserine modification. A compositionally biased stretch (basic and acidic residues) spans K770–Q785. A Glycyl lysine isopeptide (Lys-Gly) (interchain with G-Cter in SUMO2) cross-link involves residue K772. Residues S777 and S779 each carry the phosphoserine modification. A Glycyl lysine isopeptide (Lys-Gly) (interchain with G-Cter in SUMO2) cross-link involves residue K797.

Belongs to the APC4 family. As to quaternary structure, the mammalian APC/C is composed at least of 14 distinct subunits ANAPC1, ANAPC2, CDC27/APC3, ANAPC4, ANAPC5, CDC16/APC6, ANAPC7, CDC23/APC8, ANAPC10, ANAPC11, CDC26/APC12, ANAPC13, ANAPC15 and ANAPC16 that assemble into a complex of at least 19 chains with a combined molecular mass of around 1.2 MDa; APC/C interacts with FZR1 and FBXO5. In the context of the APC/C complex, directly interacts with UBE2S. Interacts with FBXO43.

It is found in the nucleus. Its pathway is protein modification; protein ubiquitination. Functionally, component of the anaphase promoting complex/cyclosome (APC/C), a cell cycle-regulated E3 ubiquitin ligase that controls progression through mitosis and the G1 phase of the cell cycle. The APC/C complex acts by mediating ubiquitination and subsequent degradation of target proteins: it mainly mediates the formation of 'Lys-11'-linked polyubiquitin chains and, to a lower extent, the formation of 'Lys-48'- and 'Lys-63'-linked polyubiquitin chains. The APC/C complex catalyzes assembly of branched 'Lys-11'-/'Lys-48'-linked branched ubiquitin chains on target proteins. The sequence is that of Anaphase-promoting complex subunit 4 (Anapc4) from Mus musculus (Mouse).